The sequence spans 199 residues: Transgelin-3 (199 aa).

The Calponin-homology (CH) domain occupies 24-136 (ADLENKLVDW…RTLMALGSVA (113 aa)). The residue at position 163 (S163) is a Phosphoserine. A Calponin-like repeat occupies 174–199 (IGLQMGSNKGASQAGMTGYGMPRQIM). Residues 178–188 (MGSNKGASQAG) are compositionally biased toward polar residues. A disordered region spans residues 178–199 (MGSNKGASQAGMTGYGMPRQIM).

It belongs to the calponin family.

This is Transgelin-3 (Tagln3) from Mus musculus (Mouse).